The primary structure comprises 658 residues: Probable rhamnogalacturonate lyase B (658 aa).

The first 19 residues, 1-19 (MRFAIPLGAACAWAGVALA), serve as a signal peptide directing secretion. N-linked (GlcNAc...) asparagine glycans are attached at residues Asn110, Asn143, Asn239, Asn280, Asn522, Asn530, Asn592, and Asn633.

It belongs to the polysaccharide lyase 4 family.

It is found in the secreted. It carries out the reaction Endotype eliminative cleavage of L-alpha-rhamnopyranosyl-(1-&gt;4)-alpha-D-galactopyranosyluronic acid bonds of rhamnogalacturonan I domains in ramified hairy regions of pectin leaving L-rhamnopyranose at the reducing end and 4-deoxy-4,5-unsaturated D-galactopyranosyluronic acid at the non-reducing end.. In terms of biological role, pectinolytic enzymes consist of four classes of enzymes: pectin lyase, polygalacturonase, pectin methylesterase and rhamnogalacturonase. Degrades the rhamnogalacturonan I (RG-I) backbone of pectin. The polypeptide is Probable rhamnogalacturonate lyase B (rglB) (Aspergillus fumigatus (strain CBS 144.89 / FGSC A1163 / CEA10) (Neosartorya fumigata)).